The primary structure comprises 300 residues: MYAFVTGANGLLGSVVVRTLREQGHAVVGSYHSEEPTFDCPLHQVDITDTERVVELLDEYDVDLVINCAAYTDVDGCESNPEVATAVNGTAPGDLAAVCDDREIPFIHYSTDYVFDGETDGFYEEGDEPAPIQEYGRSKLTGEHAVRDVNPDALILRLSFVYGARGDTSDLVGFPQWVASTLAAGDTVPLFTDQTMTPSRAGNVATTTLELLDAGVSGTFHVASQSAVTPSDFGEKICEVIGGDATLIESSVMADLDRPAARPRRSCLDVSNVEGELGCSQPTLEDDLAALEAAFSDYSS.

NADH is bound by residues 10-12 (GLL), 46-47 (DI), and 70-72 (AYT). NADPH-binding positions include 11 to 12 (LL), 46 to 47 (DI), 70 to 72 (AYT), Y109, Y135, and K139. NADH-binding residues include Y135 and K139. Catalysis depends on Y135, which acts as the Proton donor/acceptor.

This sequence belongs to the dTDP-4-dehydrorhamnose reductase family.

It functions in the pathway protein modification; protein glycosylation. It participates in cell surface structure biogenesis; S-layer biogenesis. Functionally, reductase involved in N-glycan biosynthetic pathway that takes place under low-salt conditions (1.75 M instead of 3.4 M). Participates in the formation of the tetrasaccharide present at 'Asn-532' of S-layer glycoprotein Csg, consisting of a sulfated hexose, 2 hexoses and rhamnose. Involved in the addition of final rhamnose (sugar 4) of the tetrasaccharide on the dolichol phosphate carrier. The sequence is that of Probable low-salt glycan biosynthesis reductase Agl14 (agl14) from Haloferax volcanii (strain ATCC 29605 / DSM 3757 / JCM 8879 / NBRC 14742 / NCIMB 2012 / VKM B-1768 / DS2) (Halobacterium volcanii).